The following is a 202-amino-acid chain: MNLLHLDSSILGDHSASRQLTHEVVQAYQRSHADSQVTYRDLASEALGHFSAASLAAAGTPVEARDASQQQEVDTNEATLQQFLAAEVLVIGAPMYNFTIPSQLKAWFDRIMVAGRTFRYSEAGPEGLCGGKKVIIVSTSGGLHVGQPTGAGHEELLKALFAFIGITDLQFVRAHGLAYGEEPRANAMTAAQQHIESELFAA.

FMN contacts are provided by residues Ser-9, 15-17 (SAS), 95-98 (MYNF), and 139-142 (TSGG).

This sequence belongs to the azoreductase type 1 family. As to quaternary structure, homodimer. Requires FMN as cofactor.

It carries out the reaction 2 a quinone + NADH + H(+) = 2 a 1,4-benzosemiquinone + NAD(+). The catalysed reaction is N,N-dimethyl-1,4-phenylenediamine + anthranilate + 2 NAD(+) = 2-(4-dimethylaminophenyl)diazenylbenzoate + 2 NADH + 2 H(+). In terms of biological role, quinone reductase that provides resistance to thiol-specific stress caused by electrophilic quinones. Functionally, also exhibits azoreductase activity. Catalyzes the reductive cleavage of the azo bond in aromatic azo compounds to the corresponding amines. This Pseudomonas savastanoi pv. phaseolicola (strain 1448A / Race 6) (Pseudomonas syringae pv. phaseolicola (strain 1448A / Race 6)) protein is FMN-dependent NADH:quinone oxidoreductase.